Consider the following 294-residue polypeptide: Halotolerance protein HAL1 (294 aa).

The tract at residues 115-153 (LKRGTKEQEDINSSTSKKSAVINNFSGEKTPNPRPQSSN) is disordered. Residues 125–153 (INSSTSKKSAVINNFSGEKTPNPRPQSSN) show a composition bias toward polar residues. Ser-266 is modified (phosphoserine).

Its subcellular location is the cytoplasm. In terms of biological role, involved in salt tolerance. The polypeptide is Halotolerance protein HAL1 (HAL1) (Saccharomyces cerevisiae (strain ATCC 204508 / S288c) (Baker's yeast)).